The chain runs to 457 residues: UDP-N-acetylmuramate--L-alanine ligase (457 aa).

Residue 112–118 (GTHGKTT) coordinates ATP.

The protein belongs to the MurCDEF family.

The protein localises to the cytoplasm. The catalysed reaction is UDP-N-acetyl-alpha-D-muramate + L-alanine + ATP = UDP-N-acetyl-alpha-D-muramoyl-L-alanine + ADP + phosphate + H(+). It participates in cell wall biogenesis; peptidoglycan biosynthesis. Functionally, cell wall formation. This is UDP-N-acetylmuramate--L-alanine ligase from Solidesulfovibrio magneticus (strain ATCC 700980 / DSM 13731 / RS-1) (Desulfovibrio magneticus).